The primary structure comprises 514 residues: Tryptophan decarboxylase 1 (514 aa).

Phe104 is a binding site for serotonin. Thr175 and Ser176 together coordinate pyridoxal 5'-phosphate. A serotonin-binding site is contributed by His214. Residue Thr273 participates in pyridoxal 5'-phosphate binding. Lys330 carries the post-translational modification N6-(pyridoxal phosphate)lysine. Catalysis depends on Tyr359, which acts as the Proton donor. Val380 and Gly381 together coordinate pyridoxal 5'-phosphate.

It belongs to the group II decarboxylase family. In terms of assembly, forms homodimers. Requires pyridoxal 5'-phosphate as cofactor.

The enzyme catalyses L-tryptophan + H(+) = tryptamine + CO2. It carries out the reaction 5-hydroxy-L-tryptophan + H(+) = serotonin + CO2. Involved in serotonin biosynthesis. Catalyzes the decarboxylation of L-tryptophan to produce tryptamine, which is converted to serotonin by tryptamine 5-hydroxylase. May play a major role in serotonin biosynthesis during senescence. Accumulation of serotonin attenuates leaf senescence. Catalyzes the decarboxylation of 5-hydroxy-L-tryptophan to produce serotonin. The polypeptide is Tryptophan decarboxylase 1 (Oryza sativa subsp. japonica (Rice)).